Here is a 424-residue protein sequence, read N- to C-terminus: N-succinylarginine dihydrolase (424 aa).

Residues 19–28 (AGLSRGNVAS), asparagine 110, and 137–138 (HR) each bind substrate. Residue glutamate 174 is part of the active site. Arginine 206 provides a ligand contact to substrate. Histidine 242 is a catalytic residue. Residues aspartate 244 and asparagine 351 each coordinate substrate. Cysteine 357 functions as the Nucleophile in the catalytic mechanism.

Belongs to the succinylarginine dihydrolase family. Homodimer.

It catalyses the reaction N(2)-succinyl-L-arginine + 2 H2O + 2 H(+) = N(2)-succinyl-L-ornithine + 2 NH4(+) + CO2. It functions in the pathway amino-acid degradation; L-arginine degradation via AST pathway; L-glutamate and succinate from L-arginine: step 2/5. In terms of biological role, catalyzes the hydrolysis of N(2)-succinylarginine into N(2)-succinylornithine, ammonia and CO(2). This is N-succinylarginine dihydrolase from Zymomonas mobilis subsp. mobilis (strain ATCC 31821 / ZM4 / CP4).